Reading from the N-terminus, the 234-residue chain is RNA chaperone ProQ (234 aa).

Over residues L104–E130 the composition is skewed to basic and acidic residues. A disordered region spans residues L104 to E186. The span at P131–T142 shows a compositional bias: basic residues. Basic and acidic residues-rich tracts occupy residues A143–K156 and T163–E176. A compositionally biased stretch (polar residues) spans Q177–E186.

It belongs to the ProQ family.

It is found in the cytoplasm. Functionally, RNA chaperone with significant RNA binding, RNA strand exchange and RNA duplexing activities. May regulate ProP activity through an RNA-based, post-transcriptional mechanism. The sequence is that of RNA chaperone ProQ from Edwardsiella ictaluri (strain 93-146).